The primary structure comprises 498 residues: Lysine--tRNA ligase (498 aa).

Mg(2+) contacts are provided by Glu-411 and Glu-418.

It belongs to the class-II aminoacyl-tRNA synthetase family. Homodimer. The cofactor is Mg(2+).

The protein localises to the cytoplasm. It carries out the reaction tRNA(Lys) + L-lysine + ATP = L-lysyl-tRNA(Lys) + AMP + diphosphate. The protein is Lysine--tRNA ligase of Enterococcus faecalis (strain ATCC 700802 / V583).